A 259-amino-acid polypeptide reads, in one-letter code: 3'-5' ssDNA/RNA exonuclease TatD (259 aa).

Positions 92, 128, and 153 each coordinate a divalent metal cation.

It belongs to the metallo-dependent hydrolases superfamily. TatD-type hydrolase family. TatD subfamily. Monomer. Mg(2+) serves as cofactor.

Its subcellular location is the cytoplasm. Functionally, 3'-5' exonuclease that prefers single-stranded DNA and RNA. May play a role in the H(2)O(2)-induced DNA damage repair. This is 3'-5' ssDNA/RNA exonuclease TatD from Erwinia tasmaniensis (strain DSM 17950 / CFBP 7177 / CIP 109463 / NCPPB 4357 / Et1/99).